We begin with the raw amino-acid sequence, 488 residues long: Glutamate--tRNA ligase (488 aa).

Residues 16-26 (PSPTGEPHVGT) carry the 'HIGH' region motif. The short motif at 257–261 (KLSKR) is the 'KMSKS' region element. An ATP-binding site is contributed by K260.

It belongs to the class-I aminoacyl-tRNA synthetase family. Glutamate--tRNA ligase type 1 subfamily. In terms of assembly, monomer.

It is found in the cytoplasm. It carries out the reaction tRNA(Glu) + L-glutamate + ATP = L-glutamyl-tRNA(Glu) + AMP + diphosphate. Catalyzes the attachment of glutamate to tRNA(Glu) in a two-step reaction: glutamate is first activated by ATP to form Glu-AMP and then transferred to the acceptor end of tRNA(Glu). This is Glutamate--tRNA ligase from Rhizobium johnstonii (strain DSM 114642 / LMG 32736 / 3841) (Rhizobium leguminosarum bv. viciae).